Reading from the N-terminus, the 86-residue chain is Large ribosomal subunit protein bL31 (86 aa).

A disordered region spans residues 65-86 (YGMGSANSATSKEQKEEKDSKK). A compositionally biased stretch (basic and acidic residues) spans 76 to 86 (KEQKEEKDSKK).

The protein belongs to the bacterial ribosomal protein bL31 family. Type A subfamily. Part of the 50S ribosomal subunit.

In terms of biological role, binds the 23S rRNA. The sequence is that of Large ribosomal subunit protein bL31 from Prochlorococcus marinus (strain AS9601).